A 238-amino-acid chain; its full sequence is Phosphoribosylaminoimidazole-succinocarboxamide synthase (238 aa).

The protein belongs to the SAICAR synthetase family.

The catalysed reaction is 5-amino-1-(5-phospho-D-ribosyl)imidazole-4-carboxylate + L-aspartate + ATP = (2S)-2-[5-amino-1-(5-phospho-beta-D-ribosyl)imidazole-4-carboxamido]succinate + ADP + phosphate + 2 H(+). It functions in the pathway purine metabolism; IMP biosynthesis via de novo pathway; 5-amino-1-(5-phospho-D-ribosyl)imidazole-4-carboxamide from 5-amino-1-(5-phospho-D-ribosyl)imidazole-4-carboxylate: step 1/2. The protein is Phosphoribosylaminoimidazole-succinocarboxamide synthase (purC) of Pyrococcus horikoshii (strain ATCC 700860 / DSM 12428 / JCM 9974 / NBRC 100139 / OT-3).